The primary structure comprises 408 residues: Succinylornithine transaminase (408 aa).

K252 is modified (N6-(pyridoxal phosphate)lysine).

The protein belongs to the class-III pyridoxal-phosphate-dependent aminotransferase family. AstC subfamily. Pyridoxal 5'-phosphate serves as cofactor.

It carries out the reaction N(2)-succinyl-L-ornithine + 2-oxoglutarate = N-succinyl-L-glutamate 5-semialdehyde + L-glutamate. The protein operates within amino-acid degradation; L-arginine degradation via AST pathway; L-glutamate and succinate from L-arginine: step 3/5. Functionally, catalyzes the transamination of N(2)-succinylornithine and alpha-ketoglutarate into N(2)-succinylglutamate semialdehyde and glutamate. Can also act as an acetylornithine aminotransferase. The chain is Succinylornithine transaminase from Salmonella paratyphi A (strain ATCC 9150 / SARB42).